The following is a 235-amino-acid chain: Cytidylate kinase (235 aa).

Glycine 16 to threonine 24 provides a ligand contact to ATP.

It belongs to the cytidylate kinase family. Type 1 subfamily.

It localises to the cytoplasm. The catalysed reaction is CMP + ATP = CDP + ADP. It carries out the reaction dCMP + ATP = dCDP + ADP. In Chlorobaculum tepidum (strain ATCC 49652 / DSM 12025 / NBRC 103806 / TLS) (Chlorobium tepidum), this protein is Cytidylate kinase.